Here is a 137-residue protein sequence, read N- to C-terminus: Proofreading thioesterase EntH (137 aa).

Glutamate 63 (nucleophile or proton acceptor) is an active-site residue.

It belongs to the thioesterase PaaI family. Homotetramer. Dimer of dimers. Interacts specifically with the aryl carrier protein (ArCP) domain of EntB.

It is found in the cytoplasm. The protein operates within siderophore biosynthesis; enterobactin biosynthesis. Functionally, required for optimal enterobactin synthesis. Acts as a proofreading enzyme that prevents EntB misacylation by hydrolyzing the thioester bound existing between EntB and wrongly charged molecules. In Escherichia coli O6:H1 (strain CFT073 / ATCC 700928 / UPEC), this protein is Proofreading thioesterase EntH.